We begin with the raw amino-acid sequence, 563 residues long: O-fucosyltransferase 14 (563 aa).

Over residues 1-16 (MVKVSSSTTSSSSSSS) the composition is skewed to low complexity. Residues 1–25 (MVKVSSSTTSSSSSSSPDEESDLQN) are disordered. A helical; Signal-anchor for type II membrane protein transmembrane segment spans residues 73-93 (IFIFLPIVIILIYLSTDFSNY). Residues asparagine 135, asparagine 140, and asparagine 339 are each glycosylated (N-linked (GlcNAc...) asparagine). Residues 412-414 (HFR) and 528-529 (TF) contribute to the substrate site.

It belongs to the glycosyltransferase GT106 family.

It localises to the membrane. It functions in the pathway glycan metabolism. The protein is O-fucosyltransferase 14 of Arabidopsis thaliana (Mouse-ear cress).